The sequence spans 377 residues: Chaperone protein DnaJ (377 aa).

One can recognise a J domain in the interval 5 to 69 (EFYDRLGVSK…QKRSAYDQYG (65 aa)). Residues 133-215 (GVEKDVSYHR…CHGTGHEKET (83 aa)) form a CR-type zinc finger. Zn(2+) is bound by residues Cys-146, Cys-149, Cys-163, Cys-166, Cys-189, Cys-192, Cys-203, and Cys-206. 4 CXXCXGXG motif repeats span residues 146-153 (CHTCAGSG), 163-170 (CGRCHGSG), 189-196 (CDVCHGSG), and 203-210 (CQTCHGTG).

It belongs to the DnaJ family. As to quaternary structure, homodimer. It depends on Zn(2+) as a cofactor.

The protein localises to the cytoplasm. Functionally, participates actively in the response to hyperosmotic and heat shock by preventing the aggregation of stress-denatured proteins and by disaggregating proteins, also in an autonomous, DnaK-independent fashion. Unfolded proteins bind initially to DnaJ; upon interaction with the DnaJ-bound protein, DnaK hydrolyzes its bound ATP, resulting in the formation of a stable complex. GrpE releases ADP from DnaK; ATP binding to DnaK triggers the release of the substrate protein, thus completing the reaction cycle. Several rounds of ATP-dependent interactions between DnaJ, DnaK and GrpE are required for fully efficient folding. Also involved, together with DnaK and GrpE, in the DNA replication of plasmids through activation of initiation proteins. The protein is Chaperone protein DnaJ of Streptococcus uberis (strain ATCC BAA-854 / 0140J).